We begin with the raw amino-acid sequence, 122 residues long: Small ribosomal subunit protein uS13 (122 aa).

Residues 95-122 (NLPVRGQRTHTNARTRKGKAKPIAGKKK) form a disordered region.

This sequence belongs to the universal ribosomal protein uS13 family. As to quaternary structure, part of the 30S ribosomal subunit. Forms a loose heterodimer with protein S19. Forms two bridges to the 50S subunit in the 70S ribosome.

Functionally, located at the top of the head of the 30S subunit, it contacts several helices of the 16S rRNA. In the 70S ribosome it contacts the 23S rRNA (bridge B1a) and protein L5 of the 50S subunit (bridge B1b), connecting the 2 subunits; these bridges are implicated in subunit movement. Contacts the tRNAs in the A and P-sites. The protein is Small ribosomal subunit protein uS13 of Methylobacterium sp. (strain 4-46).